A 222-amino-acid chain; its full sequence is Small ribosomal subunit protein uS3 (222 aa).

In terms of domain architecture, KH type-2 spans 39–108 (IRKFIKKELF…NVLINIVEVK (70 aa)).

This sequence belongs to the universal ribosomal protein uS3 family. Part of the 30S ribosomal subunit. Forms a tight complex with proteins S10 and S14.

In terms of biological role, binds the lower part of the 30S subunit head. Binds mRNA in the 70S ribosome, positioning it for translation. This is Small ribosomal subunit protein uS3 from Clostridium perfringens (strain ATCC 13124 / DSM 756 / JCM 1290 / NCIMB 6125 / NCTC 8237 / Type A).